The sequence spans 406 residues: Sprouty-related, EVH1 domain-containing protein 1 (406 aa).

The 118-residue stretch at 3–120 (GEQEPDDSYA…RGIRRAIEDL (118 aa)) folds into the WH1 domain. The disordered stretch occupies residues 124-154 (LPASCHGESETSEDGPQVNKEDHYSTHNNDH). Positions 142 to 154 (NKEDHYSTHNNDH) are enriched in basic and acidic residues. The 53-residue stretch at 195 to 247 (PIRHVSFQDEDEIVRINPRDMIIRRYADYRHPDIFRNDVDREEPEDVTFFTKT) folds into the KBD domain. The SPR domain maps to 296-404 (SCVYCQERFN…CGCCGGKHKA (109 aa)).

Post-translationally, palmitoylated by ZDHHC17/HIP14. In terms of processing, ubiquitinated. Phosphorylated on tyrosine.

It localises to the cell membrane. Tyrosine kinase substrate that inhibits growth-factor-mediated activation of MAP kinase. The polypeptide is Sprouty-related, EVH1 domain-containing protein 1 (spred1) (Xenopus tropicalis (Western clawed frog)).